The sequence spans 159 residues: NADH-quinone oxidoreductase subunit B (159 aa).

[4Fe-4S] cluster contacts are provided by Cys-37, Cys-38, Cys-102, and Cys-132.

The protein belongs to the complex I 20 kDa subunit family. In terms of assembly, NDH-1 is composed of 14 different subunits. Subunits NuoB, C, D, E, F, and G constitute the peripheral sector of the complex. [4Fe-4S] cluster is required as a cofactor.

Its subcellular location is the cell inner membrane. It carries out the reaction a quinone + NADH + 5 H(+)(in) = a quinol + NAD(+) + 4 H(+)(out). NDH-1 shuttles electrons from NADH, via FMN and iron-sulfur (Fe-S) centers, to quinones in the respiratory chain. The immediate electron acceptor for the enzyme in this species is believed to be ubiquinone. Couples the redox reaction to proton translocation (for every two electrons transferred, four hydrogen ions are translocated across the cytoplasmic membrane), and thus conserves the redox energy in a proton gradient. The protein is NADH-quinone oxidoreductase subunit B of Variovorax paradoxus (strain S110).